Here is a 1757-residue protein sequence, read N- to C-terminus: E3 ubiquitin-protein ligase UBR1 (1757 aa).

Residues 1–24 are disordered; the sequence is MADEEMDGAERMDVSPEPPLAPQR. Ala2 bears the N-acetylalanine mark. A UBR-type zinc finger spans residues 97-168; it reads QLCGKVFKSG…TGPFCVDHEP (72 aa). The Zn(2+) site is built by Cys99, Cys112, Cys115, Cys124, Cys127, His133, and His136. Phe148 contacts a peptide. Cys149 provides a ligand contact to Zn(2+). Asp150 serves as a coordination point for a peptide. Cys151 provides a ligand contact to Zn(2+). Asp153 lines the a peptide pocket. Residues Cys163 and His166 each coordinate Zn(2+). Positions 842 to 868 are disordered; the sequence is QHSKAEHMQKKRRKQENKDEALPPPPP. Positions 1022-1057 are UBC2-binding region (U2BR); sequence RKRKAEAARLHRQKIMAQMSALQKNFIETHKLMYDN. Residues Cys1101, Cys1104, Cys1162, His1164, His1167, and Cys1170 each coordinate Zn(2+). The segment at 1101–1204 adopts an RING-type; atypical zinc-finger fold; the sequence is CILCQEEQEV…SGEYLCPLCK (104 aa). Ser1182 carries the post-translational modification Phosphoserine. 5 residues coordinate Zn(2+): Cys1200, Cys1203, Cys1635, Cys1638, and Cys1661.

This sequence belongs to the E3 ubiquitin-protein ligase UBR1-like family. Interacts with RECQL4. Present in skeletal muscle and liver (at protein level). Broadly expressed, with highest levels in skeletal muscle and heart. Expressed in acinar cells of the pancreas. In testes, expressed primarily in spermatogonia.

It localises to the cytoplasm. The protein localises to the cytosol. It catalyses the reaction S-ubiquitinyl-[E2 ubiquitin-conjugating enzyme]-L-cysteine + [acceptor protein]-L-lysine = [E2 ubiquitin-conjugating enzyme]-L-cysteine + N(6)-ubiquitinyl-[acceptor protein]-L-lysine.. It functions in the pathway protein modification; protein ubiquitination. In terms of biological role, E3 ubiquitin-protein ligase which is a component of the N-end rule pathway. Recognizes and binds proteins bearing specific N-terminal residues (N-degrons) that are destabilizing according to the N-end rule, leading to their ubiquitination and subsequent degradation. Recognizes both type-1 and type-2 N-degrons, containing positively charged amino acids (Arg, Lys and His) and bulky and hydrophobic amino acids, respectively. Does not ubiquitinate proteins that are acetylated at the N-terminus. In contrast, it strongly binds methylated N-degrons. Binds leucine and is a negative regulator of the leucine-mTOR signaling pathway, thereby controlling cell growth. This is E3 ubiquitin-protein ligase UBR1 from Mus musculus (Mouse).